Reading from the N-terminus, the 325-residue chain is GMP reductase (325 aa).

Cys-173 serves as the catalytic Thioimidate intermediate. 202–225 contributes to the NADP(+) binding site; sequence IIADGGIRSHGDIAKSIRFGATMV.

Belongs to the IMPDH/GMPR family. GuaC type 2 subfamily.

The catalysed reaction is IMP + NH4(+) + NADP(+) = GMP + NADPH + 2 H(+). In terms of biological role, catalyzes the irreversible NADPH-dependent deamination of GMP to IMP. It functions in the conversion of nucleobase, nucleoside and nucleotide derivatives of G to A nucleotides, and in maintaining the intracellular balance of A and G nucleotides. The protein is GMP reductase of Paracidovorax citrulli (strain AAC00-1) (Acidovorax citrulli).